We begin with the raw amino-acid sequence, 246 residues long: tRNA pseudouridine synthase A (246 aa).

Residue D52 is the Nucleophile of the active site. Position 112 (Y112) interacts with substrate.

Belongs to the tRNA pseudouridine synthase TruA family. In terms of assembly, homodimer.

The catalysed reaction is uridine(38/39/40) in tRNA = pseudouridine(38/39/40) in tRNA. Its function is as follows. Formation of pseudouridine at positions 38, 39 and 40 in the anticodon stem and loop of transfer RNAs. The sequence is that of tRNA pseudouridine synthase A from Pelagibacter ubique (strain HTCC1062).